The sequence spans 151 residues: Deoxyuridine 5'-triphosphate nucleotidohydrolase (151 aa).

Substrate-binding positions include 70–72, Asn-83, 87–89, and Met-97; these read RSG and LID.

This sequence belongs to the dUTPase family. Mg(2+) is required as a cofactor.

The enzyme catalyses dUTP + H2O = dUMP + diphosphate + H(+). It functions in the pathway pyrimidine metabolism; dUMP biosynthesis; dUMP from dCTP (dUTP route): step 2/2. In terms of biological role, this enzyme is involved in nucleotide metabolism: it produces dUMP, the immediate precursor of thymidine nucleotides and it decreases the intracellular concentration of dUTP so that uracil cannot be incorporated into DNA. This chain is Deoxyuridine 5'-triphosphate nucleotidohydrolase, found in Hamiltonella defensa subsp. Acyrthosiphon pisum (strain 5AT).